A 592-amino-acid polypeptide reads, in one-letter code: A-type ATP synthase subunit A (592 aa).

Residue 234-241 (GPFGSGKT) coordinates ATP.

Belongs to the ATPase alpha/beta chains family. Has multiple subunits with at least A(3), B(3), C, D, E, F, H, I and proteolipid K(x).

It is found in the cell membrane. The catalysed reaction is ATP + H2O + 4 H(+)(in) = ADP + phosphate + 5 H(+)(out). In terms of biological role, produces ATP from ADP in the presence of a proton gradient across the membrane. The archaeal alpha chain is a catalytic subunit. Component of the A-type ATP synthase that produces ATP from ADP in the presence of a proton gradient across the membrane. The A chain is the catalytic subunit. The protein is A-type ATP synthase subunit A of Sulfolobus acidocaldarius (strain ATCC 33909 / DSM 639 / JCM 8929 / NBRC 15157 / NCIMB 11770).